The sequence spans 570 residues: Formate--tetrahydrofolate ligase (570 aa).

65–72 (TPHGEGKT) provides a ligand contact to ATP.

The protein belongs to the formate--tetrahydrofolate ligase family.

The enzyme catalyses (6S)-5,6,7,8-tetrahydrofolate + formate + ATP = (6R)-10-formyltetrahydrofolate + ADP + phosphate. The protein operates within one-carbon metabolism; tetrahydrofolate interconversion. The sequence is that of Formate--tetrahydrofolate ligase from Shewanella putrefaciens (strain CN-32 / ATCC BAA-453).